The chain runs to 640 residues: RAP domain-containing protein, chloroplastic (640 aa).

The N-terminal 32 residues, Met1–Ala32, are a transit peptide targeting the chloroplast. Residues Ser111–Asp158 are disordered. Residues Pro119–Lys136 show a composition bias toward basic residues. Residues Lys137–Asp146 show a composition bias toward basic and acidic residues. Residues Thr147–Asp158 show a composition bias toward acidic residues. Residues Leu575 to Arg633 form the RAP domain.

Expressed in roots, leaf sheaths, veins of leaf blade, mature leaves, endodermis of culm, panicles and anthers.

It localises to the plastid. It is found in the chloroplast. Probable RNA-binding protein that plays an essential role in chloroplast development. Regulates the ribosomal proteins homeostasis and ribosomal RNA development in chloroplasts. Involved the regulation of 16S rRNA and required for the expression of chloroplast-associated photosynthetic genes. The chain is RAP domain-containing protein, chloroplastic from Oryza sativa subsp. japonica (Rice).